Consider the following 235-residue polypeptide: Effector CFEM1 (235 aa).

The N-terminal stretch at 1-17 (MKFSAPVLAIFLASASA) is a signal peptide. One can recognise a CFEM domain in the interval 18 to 114 (QSTAELAAQI…ASASASSSAS (97 aa)). 4 disulfide bridges follow: cysteine 30-cysteine 72, cysteine 34-cysteine 67, cysteine 44-cysteine 51, and cysteine 53-cysteine 88. Residue aspartate 48 participates in heme binding. The GPI-anchor amidated threonine moiety is linked to residue threonine 211. The propeptide at 212 to 235 (AAGVKEEASFFIPAAVALFAVFAV) is removed in mature form.

This sequence belongs to the RBT5 family.

It localises to the cell membrane. The protein resides in the secreted. Its subcellular location is the host cytoplasm. The protein localises to the host nucleus. It is found in the host cell membrane. In terms of biological role, appears to function during host infection, and may play a role in suppressing the host immune response. This is Effector CFEM1 from Marssonina brunnea f. sp. multigermtubi (strain MB_m1) (Marssonina leaf spot fungus).